A 299-amino-acid polypeptide reads, in one-letter code: Rhodanese-like/PpiC domain-containing protein 12, chloroplastic (299 aa).

The N-terminal 81 residues, 1–81 (MFRVTGTLSA…SGFPALKMRA (81 aa)), are a transit peptide targeting the chloroplast. Serine 82 bears the N-acetylserine mark. In terms of domain architecture, PpiC spans 93 to 183 (SREILVQHLL…FGLHLLQVLS (91 aa)). The Rhodanese domain maps to 205–297 (FMDEAQLIDV…YSLKVDPSIP (93 aa)). The Cysteine persulfide intermediate role is filled by cysteine 257.

It localises to the plastid. The protein resides in the chloroplast. This is Rhodanese-like/PpiC domain-containing protein 12, chloroplastic from Arabidopsis thaliana (Mouse-ear cress).